A 405-amino-acid polypeptide reads, in one-letter code: Tryptophan synthase beta chain (405 aa).

At lysine 98 the chain carries N6-(pyridoxal phosphate)lysine.

It belongs to the TrpB family. Tetramer of two alpha and two beta chains. Pyridoxal 5'-phosphate serves as cofactor.

The catalysed reaction is (1S,2R)-1-C-(indol-3-yl)glycerol 3-phosphate + L-serine = D-glyceraldehyde 3-phosphate + L-tryptophan + H2O. Its pathway is amino-acid biosynthesis; L-tryptophan biosynthesis; L-tryptophan from chorismate: step 5/5. In terms of biological role, the beta subunit is responsible for the synthesis of L-tryptophan from indole and L-serine. The sequence is that of Tryptophan synthase beta chain from Bradyrhizobium diazoefficiens (strain JCM 10833 / BCRC 13528 / IAM 13628 / NBRC 14792 / USDA 110).